Reading from the N-terminus, the 197-residue chain is Imidazoleglycerol-phosphate dehydratase (197 aa).

Belongs to the imidazoleglycerol-phosphate dehydratase family.

Its subcellular location is the cytoplasm. The catalysed reaction is D-erythro-1-(imidazol-4-yl)glycerol 3-phosphate = 3-(imidazol-4-yl)-2-oxopropyl phosphate + H2O. The protein operates within amino-acid biosynthesis; L-histidine biosynthesis; L-histidine from 5-phospho-alpha-D-ribose 1-diphosphate: step 6/9. The polypeptide is Imidazoleglycerol-phosphate dehydratase (Halorhodospira halophila (strain DSM 244 / SL1) (Ectothiorhodospira halophila (strain DSM 244 / SL1))).